The following is a 201-amino-acid chain: IMP cyclohydrolase (201 aa).

It belongs to the archaeal IMP cyclohydrolase family.

The enzyme catalyses IMP + H2O = 5-formamido-1-(5-phospho-D-ribosyl)imidazole-4-carboxamide. It participates in purine metabolism; IMP biosynthesis via de novo pathway; IMP from 5-formamido-1-(5-phospho-D-ribosyl)imidazole-4-carboxamide: step 1/1. Catalyzes the cyclization of 5-formylamidoimidazole-4-carboxamide ribonucleotide to IMP. This Methanococcus maripaludis (strain C6 / ATCC BAA-1332) protein is IMP cyclohydrolase.